The primary structure comprises 683 residues: Methionine--tRNA ligase (683 aa).

The 'HIGH' region motif lies at Pro-14 to His-24. Zn(2+) is bound by residues Cys-145, Cys-148, Cys-158, and Cys-161. A 'KMSKS' region motif is present at residues Lys-331–Ser-335. Lys-334 provides a ligand contact to ATP. One can recognise a tRNA-binding domain in the interval Ala-581–Lys-683.

It belongs to the class-I aminoacyl-tRNA synthetase family. MetG type 1 subfamily. As to quaternary structure, homodimer. Zn(2+) serves as cofactor.

The protein localises to the cytoplasm. The enzyme catalyses tRNA(Met) + L-methionine + ATP = L-methionyl-tRNA(Met) + AMP + diphosphate. In terms of biological role, is required not only for elongation of protein synthesis but also for the initiation of all mRNA translation through initiator tRNA(fMet) aminoacylation. The sequence is that of Methionine--tRNA ligase from Pseudomonas fluorescens (strain SBW25).